A 128-amino-acid polypeptide reads, in one-letter code: MIVKSLDDIIGTDDETSSDNWTSRRFIMKKDNVGFSLNDTLIKAGTTNFFWYKNHIEAVYCIEGEGEIEKLETGEIYKLKAGTMYLLNEHDKHELRAKTQMRMVCVFNPPLVGTETHTEEGYYPLLTE.

Belongs to the ectoine synthase family.

It catalyses the reaction (2S)-4-acetamido-2-aminobutanoate = L-ectoine + H2O. It participates in amine and polyamine biosynthesis; ectoine biosynthesis; L-ectoine from L-aspartate 4-semialdehyde: step 3/3. Its function is as follows. Catalyzes the circularization of gamma-N-acetyl-alpha,gamma-diaminobutyric acid (ADABA) to ectoine (1,4,5,6-tetrahydro-2-methyl-4-pyrimidine carboxylic acid), which is an excellent osmoprotectant. This Virgibacillus pantothenticus protein is L-ectoine synthase.